Consider the following 151-residue polypeptide: Phosphopantetheine adenylyltransferase (151 aa).

S9 is a binding site for substrate. Residues 9–10 and H17 each bind ATP; that span reads SF. K41, T73, and R87 together coordinate substrate. ATP-binding positions include 88–90, E98, and 122–128; these read GLR and TSFISSS.

It belongs to the bacterial CoaD family. As to quaternary structure, homohexamer. It depends on Mg(2+) as a cofactor.

The protein resides in the cytoplasm. It carries out the reaction (R)-4'-phosphopantetheine + ATP + H(+) = 3'-dephospho-CoA + diphosphate. Its pathway is cofactor biosynthesis; coenzyme A biosynthesis; CoA from (R)-pantothenate: step 4/5. Functionally, reversibly transfers an adenylyl group from ATP to 4'-phosphopantetheine, yielding dephospho-CoA (dPCoA) and pyrophosphate. This Flavobacterium psychrophilum (strain ATCC 49511 / DSM 21280 / CIP 103535 / JIP02/86) protein is Phosphopantetheine adenylyltransferase.